A 187-amino-acid polypeptide reads, in one-letter code: TATA-box-binding protein (187 aa).

2 repeat units span residues 10-86 (IENV…FDKL) and 101-179 (VQNI…VSRL).

It belongs to the TBP family.

Functionally, general factor that plays a role in the activation of archaeal genes transcribed by RNA polymerase. Binds specifically to the TATA box promoter element which lies close to the position of transcription initiation. The polypeptide is TATA-box-binding protein (Natronomonas pharaonis (strain ATCC 35678 / DSM 2160 / CIP 103997 / JCM 8858 / NBRC 14720 / NCIMB 2260 / Gabara) (Halobacterium pharaonis)).